We begin with the raw amino-acid sequence, 504 residues long: uncharacterized protein (504 aa).

This sequence to M.thermoautotrophicum MTH1137.

This is an uncharacterized protein from Methanocaldococcus jannaschii (strain ATCC 43067 / DSM 2661 / JAL-1 / JCM 10045 / NBRC 100440) (Methanococcus jannaschii).